Reading from the N-terminus, the 301-residue chain is Prestalk A differentiation protein A (301 aa).

Belongs to the NmrA-type oxidoreductase family.

Functionally, involved in development and cell differentiation. The chain is Prestalk A differentiation protein A (padA) from Dictyostelium discoideum (Social amoeba).